Here is a 62-residue protein sequence, read N- to C-terminus: Defensin BmKDfsin3 (62 aa).

The N-terminal stretch at 1–24 (MKTIVILFVLALVFCTLEMGMVEA) is a signal peptide. Cystine bridges form between C28–C49, C35–C57, and C39–C59.

Belongs to the invertebrate defensin family. Type 2 subfamily. In terms of tissue distribution, low expression in both venom and non-venom glands (hemolymph).

Its subcellular location is the secreted. Antibacterial peptide active against Gram-positive bacteria (including S.aureus ATCC25923 (MIC=2.5 uM), M.luteus AB93113 (MIC=2.5 uM), and the antibiotic-resistant S.epidermidis PRSE P1389 (MIC=1.25 uM)), but not against Gram-negative bacteria (including E.coli and P.aeruginosa). Also blocks the currents of Kv1.1/KCNA1 (57% inhibition), Kv1.2/KCNA2 (27.5% inhibition), Kv1.3/KCNA3 (IC(50)=23.4 nM, 84.3% inhibition), KCa3.1/KCNN4/IK (15% inhibition), KCa2.3/KCNN3/SK3 (87.5% inhibition) and Kv11.1/KCNH2/ERG1 (30.4% inhibition) channels (tested at 1 uM). It inhibits potassium channel current by interacting with the pore region. The sequence is that of Defensin BmKDfsin3 from Olivierus martensii (Manchurian scorpion).